The chain runs to 381 residues: tRNA (guanine(6)-N2)-methyltransferase (381 aa).

Residues 43–157 (KLIPKINYLS…FDELIVGIDT (115 aa)) enclose the THUMP domain. Residues 173–177 (HPAHL), 204–206 (SGT), D261, 289–290 (DA), and N306 each bind S-adenosyl-L-methionine.

This sequence belongs to the methyltransferase superfamily.

It is found in the cytoplasm. It carries out the reaction guanosine(6) in tRNA + S-adenosyl-L-methionine = N(2)-methylguanosine(6) in tRNA + S-adenosyl-L-homocysteine + H(+). In terms of biological role, S-adenosyl-L-methionine-dependent methyltransferase that catalyzes the methylation of the guanosine nucleotide at position 6 (m2G6) in tRNA(Cys). This is tRNA (guanine(6)-N2)-methyltransferase from Methanocaldococcus jannaschii (strain ATCC 43067 / DSM 2661 / JAL-1 / JCM 10045 / NBRC 100440) (Methanococcus jannaschii).